The sequence spans 242 residues: Putative serine/threonine-protein kinase (242 aa).

One can recognise a Protein kinase domain in the interval 49–242 (FSSKNKVGEG…KSDVYSFGVL (194 aa)). ATP is bound by residues 55–63 (VGEGGCGAV) and Lys-77. Asp-177 acts as the Proton acceptor in catalysis.

This sequence belongs to the protein kinase superfamily. Ser/Thr protein kinase family.

It carries out the reaction L-seryl-[protein] + ATP = O-phospho-L-seryl-[protein] + ADP + H(+). The enzyme catalyses L-threonyl-[protein] + ATP = O-phospho-L-threonyl-[protein] + ADP + H(+). The protein is Putative serine/threonine-protein kinase of Helianthus annuus (Common sunflower).